The primary structure comprises 350 residues: Solute carrier family 35 member E4 (350 aa).

Helical transmembrane passes span 40 to 60, 79 to 99, 110 to 130, 135 to 155, 218 to 238, 258 to 278, 279 to 299, and 301 to 321; these read VLGQ…LLAG, PLLL…WGAQ, VLLL…GLST, LAQL…ALLL, VTLL…AALV, VLLS…LLAL, TSAL…LILS, and LLFG…TLSG. The EamA domain maps to 125-179; sequence NVGLSTVPLDLAQLATTTTPLFTLALSALLLGRRHHPLQFAAMGPLCLGAACSLA.

It belongs to the TPT transporter family. SLC35E subfamily.

Its subcellular location is the membrane. In terms of biological role, putative transporter. The chain is Solute carrier family 35 member E4 (Slc35e4) from Rattus norvegicus (Rat).